The sequence spans 227 residues: 7-cyano-7-deazaguanine synthase (227 aa).

8–18 contributes to the ATP binding site; it reads LSGGTDSATVL. Residues Cys192, Cys202, Cys205, and Cys208 each contribute to the Zn(2+) site.

Belongs to the QueC family. Zn(2+) is required as a cofactor.

It catalyses the reaction 7-carboxy-7-deazaguanine + NH4(+) + ATP = 7-cyano-7-deazaguanine + ADP + phosphate + H2O + H(+). The protein operates within purine metabolism; 7-cyano-7-deazaguanine biosynthesis. In terms of biological role, catalyzes the ATP-dependent conversion of 7-carboxy-7-deazaguanine (CDG) to 7-cyano-7-deazaguanine (preQ(0)). The protein is 7-cyano-7-deazaguanine synthase of Rickettsia prowazekii (strain Madrid E).